The chain runs to 273 residues: Dermonecrotic toxin LapSicTox-alphaIB1b2 (273 aa).

His5 is an active-site residue. Mg(2+)-binding residues include Glu25 and Asp27. The active-site Nucleophile is His41. 2 cysteine pairs are disulfide-bonded: Cys45–Cys51 and Cys47–Cys190. Residue Asp85 participates in Mg(2+) binding. The N-linked (GlcNAc...) asparagine glycan is linked to Asn250.

The protein belongs to the arthropod phospholipase D family. Class II subfamily. The cofactor is Mg(2+). As to expression, expressed by the venom gland.

Its subcellular location is the secreted. It carries out the reaction an N-(acyl)-sphingosylphosphocholine = an N-(acyl)-sphingosyl-1,3-cyclic phosphate + choline. The enzyme catalyses an N-(acyl)-sphingosylphosphoethanolamine = an N-(acyl)-sphingosyl-1,3-cyclic phosphate + ethanolamine. The catalysed reaction is a 1-acyl-sn-glycero-3-phosphocholine = a 1-acyl-sn-glycero-2,3-cyclic phosphate + choline. It catalyses the reaction a 1-acyl-sn-glycero-3-phosphoethanolamine = a 1-acyl-sn-glycero-2,3-cyclic phosphate + ethanolamine. Its function is as follows. Dermonecrotic toxins cleave the phosphodiester linkage between the phosphate and headgroup of certain phospholipids (sphingolipid and lysolipid substrates), forming an alcohol (often choline) and a cyclic phosphate. This toxin acts on sphingomyelin (SM). It may also act on ceramide phosphoethanolamine (CPE), lysophosphatidylcholine (LPC) and lysophosphatidylethanolamine (LPE), but not on lysophosphatidylserine (LPS), and lysophosphatidylglycerol (LPG). It acts by transphosphatidylation, releasing exclusively cyclic phosphate products as second products. Induces dermonecrosis, hemolysis, increased vascular permeability, edema, inflammatory response, and platelet aggregation. This is Dermonecrotic toxin LapSicTox-alphaIB1b2 from Loxosceles apachea (Apache recluse spider).